Reading from the N-terminus, the 275-residue chain is MAGQAGSLQGRVAFITGAARGQGRSHAVRLAAEGADIIACDICAPVSASVTYAPASPEDLDETARLVEDQGRKALTRVLDVRDDAALRELVADGMEQFGRLDVVVANAGVLSWGRVWELTDEQWDTVIGVNLTGTWRTLRATVPAMIEAGNGGSIVVVSSSAGLKATPGNGHYSASKHGLTALTNTLAIELGEYGIRVNSIHPYSVETPMIEPEAMMEIFARHPSFVHSFPPMPVQPNGFMTADEVADVVAWLAGDGSGTLTGTQIPVDKGALKY.

Residues 20–22 (RGQ), 41–42 (DI), 80–81 (DV), and asparagine 107 each bind NAD(+). Substrate is bound at residue serine 160. Tyrosine 173 serves as the catalytic Proton acceptor. Residues lysine 177 and 206–208 (VET) each bind NAD(+).

The protein belongs to the short-chain dehydrogenases/reductases (SDR) family.

This is an uncharacterized protein from Mycolicibacterium paratuberculosis (strain ATCC BAA-968 / K-10) (Mycobacterium paratuberculosis).